Reading from the N-terminus, the 1308-residue chain is D-lysergyl-peptide-synthetase subunit 2 (1308 aa).

Residues 261-658 are adenylation (A) domain; the sequence is EWCRRTPSAV…CRKSTQVKLR (398 aa). Residues 803–871 enclose the Carrier domain; that stretch reads IEEAFQRFFA…ELSELARHTK (69 aa). S835 carries the O-(pantetheine 4'-phosphoryl)serine modification. A condensation (C) domain region spans residues 910-1299; sequence EDVYPCTPLQ…HAAPRTLIGD (390 aa).

It belongs to the NRP synthetase family.

The protein operates within alkaloid biosynthesis; ergot alkaloid biosynthesis. In terms of biological role, D-lysergyl-peptide-synthetase subunit 2; part of the gene cluster that mediates the biosynthesis of fungal ergot alkaloid. DmaW catalyzes the first step of ergot alkaloid biosynthesis by condensing dimethylallyl diphosphate (DMAP) and tryptophan to form 4-dimethylallyl-L-tryptophan. The second step is catalyzed by the methyltransferase easF that methylates 4-dimethylallyl-L-tryptophan in the presence of S-adenosyl-L-methionine, resulting in the formation of 4-dimethylallyl-L-abrine. The catalase easC and the FAD-dependent oxidoreductase easE then transform 4-dimethylallyl-L-abrine to chanoclavine-I which is further oxidized by EasD in the presence of NAD(+), resulting in the formation of chanoclavine-I aldehyde. Agroclavine dehydrogenase easG then mediates the conversion of chanoclavine-I aldehyde to agroclavine via a non-enzymatic adduct reaction: the substrate is an iminium intermediate that is formed spontaneously from chanoclavine-I aldehyde in the presence of glutathione. The presence of easA is not required to complete this reaction. Further conversion of agroclavine to paspalic acid is a two-step process involving oxidation of agroclavine to elymoclavine and of elymoclavine to paspalic acid, the second step being performed by the elymoclavine oxidase cloA. Paspalic acid is then further converted to D-lysergic acid. Ergopeptines are assembled from D-lysergic acid and three different amino acids by the D-lysergyl-peptide-synthetases composed each of a monomudular and a trimodular nonribosomal peptide synthetase subunit. LpsB and lpsC encode the monomodular subunits responsible for D-lysergic acid activation and incorporation into the ergopeptine backbone. LpsA1 and A2 subunits encode the trimodular nonribosomal peptide synthetase assembling the tripeptide portion of ergopeptines. LpsA1 is responsible for formation of the major ergopeptine, ergotamine, and lpsA2 for alpha-ergocryptine, the minor ergopeptine of the total alkaloid mixture elaborated by C.purpurea. D-lysergyl-tripeptides are assembled by the nonribosomal peptide synthetases and released as N-(D-lysergyl-aminoacyl)-lactams. Cyclolization of the D-lysergyl-tripeptides is performed by the Fe(2+)/2-ketoglutarate-dependent dioxygenase easH which introduces a hydroxyl group into N-(D-lysergyl-aminoacyl)-lactam at alpha-C of the aminoacyl residue followed by spontaneous condensation with the terminal lactam carbonyl group. This Claviceps purpurea (Ergot fungus) protein is D-lysergyl-peptide-synthetase subunit 2.